The chain runs to 392 residues: Sulfate adenylyltransferase (392 aa).

This sequence belongs to the sulfate adenylyltransferase family.

The enzyme catalyses sulfate + ATP + H(+) = adenosine 5'-phosphosulfate + diphosphate. The protein operates within sulfur metabolism; hydrogen sulfide biosynthesis; sulfite from sulfate: step 1/3. The polypeptide is Sulfate adenylyltransferase (Nostoc punctiforme (strain ATCC 29133 / PCC 73102)).